Consider the following 301-residue polypeptide: Acetylglutamate kinase (301 aa).

Substrate-binding positions include 64 to 65 (GG), Arg86, and Asn181.

It belongs to the acetylglutamate kinase family. ArgB subfamily.

The protein resides in the cytoplasm. The enzyme catalyses N-acetyl-L-glutamate + ATP = N-acetyl-L-glutamyl 5-phosphate + ADP. The protein operates within amino-acid biosynthesis; L-arginine biosynthesis; N(2)-acetyl-L-ornithine from L-glutamate: step 2/4. Its function is as follows. Catalyzes the ATP-dependent phosphorylation of N-acetyl-L-glutamate. The sequence is that of Acetylglutamate kinase from Aliarcobacter butzleri (strain RM4018) (Arcobacter butzleri).